The following is a 351-amino-acid chain: Serine/threonine-protein kinase ZRK1 (351 aa).

Residues F60–L347 form the Protein kinase domain. ATP is bound by residues V66–W74 and K87. Catalysis depends on D191, which acts as the Proton acceptor.

Belongs to the protein kinase superfamily. Ser/Thr protein kinase family. ZRK subfamily. In terms of assembly, component of a stable high-order oligomeric complex made of RKS1 and RPP13L4/ZAR1 which recruits Xanthomonas campestris effector XopAC/AvrAC-mediated uridylylated PBL2 in the presence of ATP to form a wheel-like pentameric resistosome; this complex triggers immunity toward X.campestris in vascular tissues. Interacts with RPP13L4/ZAR1 and uridylylated PBL2. In terms of tissue distribution, expressed at high levels in germinating seeds and at lower levels in adult leaves.

The enzyme catalyses L-seryl-[protein] + ATP = O-phospho-L-seryl-[protein] + ADP + H(+). It carries out the reaction L-threonyl-[protein] + ATP = O-phospho-L-threonyl-[protein] + ADP + H(+). Its function is as follows. Serine/threonine-protein kinase that confers a broad-spectrum quantitative disease resistance (QDR) to the pathogenic biotrophic bacteria Xanthomonas campestris (e.g. pv. campestris (Xcc), pv. raphani, pv. armoriaceae and pv. incanae) by restricting bacterial spread to the vascular system from the infection site; X.campestris causes black rot disease in crops. Seems to not have any kinase activity. This is Serine/threonine-protein kinase ZRK1 from Arabidopsis thaliana (Mouse-ear cress).